Consider the following 992-residue polypeptide: Leucine-rich repeat receptor-like serine/threonine-protein kinase BAM3 (992 aa).

Positions 1–21 (MADKIFTFFLILSSISPLLCS) are cleaved as a signal peptide. At 22–656 (SLISPLNLSL…ARSRGEISAK (635 aa)) the chain is on the extracellular side. An N-linked (GlcNAc...) asparagine glycan is attached at N28. A disulfide bridge links C64 with C71. N-linked (GlcNAc...) asparagine glycosylation is found at N75 and N87. LRR repeat units lie at residues 75–99 (NQSI…ISRL), 100–124 (SPSL…IYEL), 126–148 (GLEV…GFSQ), 150–173 (TQLV…LTTL), 174–199 (TRLE…SFLS), and 201–221 (KFLS…LANI). N-linked (GlcNAc...) asparagine glycans are attached at residues N131 and N163. N-linked (GlcNAc...) asparagine glycosylation occurs at N220. The CLE45 peptide binding motif lies at 226 to 231 (QLYLGY). LRR repeat units follow at residues 246–270 (LINL…LGNL), 271–294 (KNLE…LGNM), 296–320 (SLKT…GLQK), 322–342 (QLFN…VSEL), 343–366 (PDLQ…LGSN), 368–391 (NLIE…CFGR), 393–414 (LKIL…LGQC), 415–438 (EPLW…LIYL), 439–462 (PNLS…EAGN), 465–489 (FSSL…IRNL), 491–513 (SLQI…IGSL), 514–536 (KSLL…EFGD), 537–561 (CMSL…ISQI), 563–585 (ILNY…LGYM), and 586–610 (KSLT…QFSY). N-linked (GlcNAc...) asparagine glycosylation is found at N256 and N293. A glycan (N-linked (GlcNAc...) asparagine) is linked at N354. N440 and N472 each carry an N-linked (GlcNAc...) asparagine glycan. N525 carries an N-linked (GlcNAc...) asparagine glycan. 6 N-linked (GlcNAc...) asparagine glycosylation sites follow: N568, N575, N597, N613, N631, and N635. Residues 657-677 (FKLFFGLGLLGFFLVFVVLAV) form a helical membrane-spanning segment. Residues 678–992 (VKNRRMRKNN…ISQAKQPNTF (315 aa)) are Cytoplasmic-facing. In terms of domain architecture, Protein kinase spans 710 to 992 (VKENHVIGKG…ISQAKQPNTF (283 aa)). Residues 716 to 724 (IGKGGRGIV) and K738 contribute to the ATP site. D836 functions as the Proton acceptor in the catalytic mechanism.

This sequence belongs to the protein kinase superfamily. Ser/Thr protein kinase family. Interacts with CLE45, especially in roots. Binds to the dimer CLV2/CRN. In terms of tissue distribution, expressed in seedlings, roots, leaves, stems, inflorescences, flowers and siliques. In roots, confined to protophloem and sieve element precursor cells.

The protein localises to the cell membrane. It localises to the endoplasmic reticulum membrane. The enzyme catalyses L-seryl-[protein] + ATP = O-phospho-L-seryl-[protein] + ADP + H(+). The catalysed reaction is L-threonyl-[protein] + ATP = O-phospho-L-threonyl-[protein] + ADP + H(+). Its function is as follows. Necessary for male gametophyte development, as well as ovule specification and function. Required for the development of high-ordered vascular strands within the leaf and a correlated control of leaf shape, size and symmetry. LRR-rich receptor-like kinase (LRR-RLK) involved in the perception of CLE45 peptide ligand which mediates root growth inhibition by repressing protophloem differentiation; this mechanism requires CRN. BRX, BAM3, and CLE45 act together to regulate the transition of protophloem cells from proliferation to differentiation, thus impinging on postembryonic growth capacity of the root meristem. Necessary for CLE45 peptide-triggered accumulation of MAKR5 in developing sieve elements. In Arabidopsis thaliana (Mouse-ear cress), this protein is Leucine-rich repeat receptor-like serine/threonine-protein kinase BAM3.